A 456-amino-acid polypeptide reads, in one-letter code: D-glycerate 3-kinase, chloroplastic (456 aa).

The transit peptide at 1–63 (MAVAISGSSL…KFNDHVVNPS (63 aa)) directs the protein to the chloroplast. ATP is bound at residue 215 to 222 (APQGCGKT).

This sequence belongs to the GLYK kinase family.

The protein localises to the plastid. The protein resides in the chloroplast. It localises to the cytoplasm. It carries out the reaction (R)-glycerate + ATP = (2R)-3-phosphoglycerate + ADP + H(+). It functions in the pathway photosynthesis; photorespiration; 3-phospho-D-glycerate from glycine: step 4/4. Its function is as follows. Catalyzes the concluding reaction of the photorespiratory C2 cycle, an indispensable ancillary metabolic pathway to the photosynthetic C3 cycle that enables land plants to grow in an oxygen-containing atmosphere. In terms of biological role, cytoplasmic D-glycerate 3-kinase that constitutes a photorespiratory bypass that alleviates fluctuating light-induced photoinhibition. In Arabidopsis thaliana (Mouse-ear cress), this protein is D-glycerate 3-kinase, chloroplastic.